Reading from the N-terminus, the 327-residue chain is D-alanine--D-alanine ligase (327 aa).

Residues 113–312 (KRLWMTYGLA…YEDFVMQVVA (200 aa)) form the ATP-grasp domain. 139 to 194 (AADLGLPLIVKPAREGSSIGLTKVTAADQMRAAFEKAAALDNDVIAETFIDGAELT) provides a ligand contact to ATP. Mg(2+) is bound by residues Asp-266, Glu-279, and Asn-281.

It belongs to the D-alanine--D-alanine ligase family. Requires Mg(2+) as cofactor. Mn(2+) is required as a cofactor.

It is found in the cytoplasm. The catalysed reaction is 2 D-alanine + ATP = D-alanyl-D-alanine + ADP + phosphate + H(+). Its pathway is cell wall biogenesis; peptidoglycan biosynthesis. Its function is as follows. Cell wall formation. In Cupriavidus necator (strain ATCC 17699 / DSM 428 / KCTC 22496 / NCIMB 10442 / H16 / Stanier 337) (Ralstonia eutropha), this protein is D-alanine--D-alanine ligase.